The chain runs to 431 residues: MRQLSTQDADFDSQLTELLAFETVNDATLLTTVDDIIARVRHGGDSVVLELTQQFDQHPATTTQALELSKEALAEAFANLDDVVKSALITAATRVKTFHERQVQETWQYEDELGNRLGQKVTALDRVGIYVPGGLASYPSSVLMNAIPAKVAGVKEVIMVVPAPKGVLNPLVLAAAHLAKVDRVFTIGGAQAVAALAYGTETIPAVDKITGPGNKYVAAAKRAVFGQVGIDMIAGPSEVLVYAEGEAQDRADWLAMDLLSQAEHDRIAQAIFVTTSAQQLKEVAIEIEKALAELPKADIARDSLKNRGVLILVRDREEGMAVINRVAPEHLELSVDHPDALLNSIRHAGAIFMGRHTPEAIGDYCAGPNHVLPTSGTARFSSPLGVYDFQKKSSIIYCSESGSKPLAQTADILAQHEDLEAHARSARYRYQ.

Positions 130, 191, and 214 each coordinate NAD(+). 3 residues coordinate substrate: serine 237, glutamine 261, and histidine 264. Residues glutamine 261 and histidine 264 each contribute to the Zn(2+) site. Catalysis depends on proton acceptor residues glutamate 329 and histidine 330. The substrate site is built by histidine 330, aspartate 363, glutamate 417, and histidine 422. Zn(2+) is bound at residue aspartate 363. A Zn(2+)-binding site is contributed by histidine 422.

It belongs to the histidinol dehydrogenase family. It depends on Zn(2+) as a cofactor.

The enzyme catalyses L-histidinol + 2 NAD(+) + H2O = L-histidine + 2 NADH + 3 H(+). It participates in amino-acid biosynthesis; L-histidine biosynthesis; L-histidine from 5-phospho-alpha-D-ribose 1-diphosphate: step 9/9. In terms of biological role, catalyzes the sequential NAD-dependent oxidations of L-histidinol to L-histidinaldehyde and then to L-histidine. This chain is Histidinol dehydrogenase, found in Psychrobacter arcticus (strain DSM 17307 / VKM B-2377 / 273-4).